Consider the following 362-residue polypeptide: P2Y purinoceptor 1 (362 aa).

The Extracellular segment spans residues 1–40 (MTEALISAALNGTQPELLAGGWAAGNATTKCSLTKTGFQF). N-linked (GlcNAc...) asparagine glycans are attached at residues asparagine 11 and asparagine 26. Intrachain disulfides connect cysteine 31/cysteine 285 and cysteine 113/cysteine 191. An ADP-binding site is contributed by lysine 35. The helical transmembrane segment at 41–63 (YYLPTVYILVFITGFLGNSVAIW) threads the bilayer. Over 64 to 76 (MFVFHMRPWSGIS) the chain is Cytoplasmic. A helical membrane pass occupies residues 77-98 (VYMFNLALADFLYVLTLPALIF). The Extracellular segment spans residues 99–114 (YYFNKTDWIFGDVMCK). Asparagine 102 is a glycosylation site (N-linked (GlcNAc...) asparagine). Residues 115–136 (LQRFIFHVNLYGSILFLTCISV) traverse the membrane as a helical segment. The Cytoplasmic segment spans residues 137 to 155 (HRYTGVVHPLKSLGRLKKK). Residues 156 to 177 (NAVYVSSLVWALVVAVIAPILF) traverse the membrane as a helical segment. The Extracellular portion of the chain corresponds to 178-203 (YSGTGVRRNKTITCYDTTADEYLRSY). Asparagine 186 carries N-linked (GlcNAc...) asparagine glycosylation. 192–194 (YDT) is an ADP binding site. A helical transmembrane segment spans residues 204-226 (FVYSMCTTVFMFCIPFIVILGCY). Over 227 to 249 (GLIVKALIYKDLDNSPLRRKSIY) the chain is Cytoplasmic. A helical transmembrane segment spans residues 250-273 (LVIIVLTVFAVSYLPFHVMKTLNL). ADP-binding positions include 272 to 276 (NLRAR), 292 to 295 (YATY), and arginine 299. The Extracellular segment spans residues 274-292 (RARLDFQTPQMCAFNDKVY). A helical transmembrane segment spans residues 293–314 (ATYQVTRGLASLNSCVDPILYF). Residues 315-362 (LAGDTFRRRLSRATRKSSRRSEPNVQSKSEEMTLNILTEYKQNGDTSL) are Cytoplasmic-facing.

The protein belongs to the G-protein coupled receptor 1 family. In terms of tissue distribution, brain, spinal cord, gastrointestinal tract, spleen and leg muscle. Is not detected in the heart, liver, stomach, lung and kidney.

The protein resides in the cell membrane. Functionally, receptor for extracellular adenine nucleotides such as ADP. In platelets, binding to ADP leads to mobilization of intracellular calcium ions via activation of phospholipase C, a change in platelet shape, and ultimately platelet aggregation. In Gallus gallus (Chicken), this protein is P2Y purinoceptor 1 (P2RY1).